The chain runs to 459 residues: Plasma alpha-L-fucosidase (459 aa).

Positions 1–23 (MRLGLLMFLPLLLLATRYRAVTA) are cleaved as a signal peptide. N-linked (GlcNAc...) asparagine glycans are attached at residues asparagine 163 and asparagine 231. At serine 293 the chain carries Phosphoserine. A glycan (N-linked (GlcNAc...) asparagine) is linked at asparagine 369.

This sequence belongs to the glycosyl hydrolase 29 family. Homotetramer.

The protein resides in the secreted. It carries out the reaction an alpha-L-fucoside + H2O = L-fucose + an alcohol. Its function is as follows. Alpha-L-fucosidase is responsible for hydrolyzing the alpha-1,6-linked fucose joined to the reducing-end N-acetylglucosamine of the carbohydrate moieties of glycoproteins. The sequence is that of Plasma alpha-L-fucosidase (Fuca2) from Rattus norvegicus (Rat).